We begin with the raw amino-acid sequence, 133 residues long: MAVPLLTKKVVKKRSAKFIRPQSDRRITVKESWRRPKGIDSRVRRKFKGVTLMPNVGYGSDKKTRHYLPNGFKKFIVHNTSELELLMMHNRTYCAEIAHNISTKKRKAIVERASQLDVVVSNKLGRLRSQEDE.

This sequence belongs to the eukaryotic ribosomal protein eL32 family.

The protein is Large ribosomal subunit protein eL32y (RPL32B) of Arabidopsis thaliana (Mouse-ear cress).